The following is a 219-amino-acid chain: Probable nicotinate-nucleotide adenylyltransferase (219 aa).

Belongs to the NadD family.

The enzyme catalyses nicotinate beta-D-ribonucleotide + ATP + H(+) = deamido-NAD(+) + diphosphate. Its pathway is cofactor biosynthesis; NAD(+) biosynthesis; deamido-NAD(+) from nicotinate D-ribonucleotide: step 1/1. Catalyzes the reversible adenylation of nicotinate mononucleotide (NaMN) to nicotinic acid adenine dinucleotide (NaAD). The protein is Probable nicotinate-nucleotide adenylyltransferase of Herminiimonas arsenicoxydans.